We begin with the raw amino-acid sequence, 526 residues long: MIRTALLSVSDKNGIVPFAKSLHEQGIKLISTGGTAKLLAENNLPVVEVSSLTKFPEMLDGRVKTLHPMVHGGLLARRDFPEHMAALEEHGIDTIDMLVINLYPFNETVAKENCSFEDAVENIDIGGPAMLRAAAKNHQDVTVLISPEDYAPVLAEMKANQNVVSYKTNLALAKKVFAHTAQYDGSIANYLSALGDDLDHKARSAYPETLHLAFEKVQEMRYGENPHQSAAFYKDIYPVNGALANYKQLQGKELSYNNIADADSAWECVKSFAGNSGGAAACVIIKHANPCGVAVGASALEAYQKAFKTDPSSAFGGIIAFNIPCDGAAAQEISKQFVEVLIAPSFTDEAKAIFAAKQNVRLLEIPLGNAFNTFDFKRVGGGLLVQSPDAKNVLQNEMRVVSQRQPTPSEMNDMMFAWRVAKFVKSNAIVYCSNGMTLGIGAGQMSRVDSARMASIKAENAGLSLKGSAVASDAFFPFRDGLDVVVNGGASCAIQPGGSMRDDEIIAAANEHGIAMIFTGTRHFRH.

Residues 1–145 form the MGS-like domain; it reads MIRTALLSVS…KNHQDVTVLI (145 aa).

The protein belongs to the PurH family.

It catalyses the reaction (6R)-10-formyltetrahydrofolate + 5-amino-1-(5-phospho-beta-D-ribosyl)imidazole-4-carboxamide = 5-formamido-1-(5-phospho-D-ribosyl)imidazole-4-carboxamide + (6S)-5,6,7,8-tetrahydrofolate. It carries out the reaction IMP + H2O = 5-formamido-1-(5-phospho-D-ribosyl)imidazole-4-carboxamide. The protein operates within purine metabolism; IMP biosynthesis via de novo pathway; 5-formamido-1-(5-phospho-D-ribosyl)imidazole-4-carboxamide from 5-amino-1-(5-phospho-D-ribosyl)imidazole-4-carboxamide (10-formyl THF route): step 1/1. It functions in the pathway purine metabolism; IMP biosynthesis via de novo pathway; IMP from 5-formamido-1-(5-phospho-D-ribosyl)imidazole-4-carboxamide: step 1/1. This is Bifunctional purine biosynthesis protein PurH from Polynucleobacter asymbioticus (strain DSM 18221 / CIP 109841 / QLW-P1DMWA-1) (Polynucleobacter necessarius subsp. asymbioticus).